We begin with the raw amino-acid sequence, 378 residues long: MLKLMGSLVLLASAAEVIASPAAEPVAPSTTLEKRAPCTFSGSNGAAAAMASQKACSTIVLSNVAVPAGTTLDLSDLADGTTVTFEGETTWGYQEWSGPLLKISGKNIKVKGASGATLNPDGARWWDGQGGNGGKTKPKFFAAHDLTSSSSITDLHILNTPVQAVSINGCDGLTITDITIDNSAGDTQGGHNTDAFDIGSSSNIIISGAKVYNQDDCVAVNSGTDITFTGGLCSGGHGLSIGSVGGRSDNTVENVSFTNSQVTNSDNGLRIKATKGKTGTIKGVTYSGITLSSIRKYGILIEQNYDGGDLKGDPTSGIPITDLTMQNISGKGAVASSGYNIAIVCGSGACSNWTWKSVEVTGGKTYGSCKNVPSVAQC.

Positions methionine 1–alanine 19 are cleaved as a signal peptide. Positions serine 20 to arginine 35 are excised as a propeptide. A disulfide bridge connects residues cysteine 38 and cysteine 56. PbH1 repeat units follow at residues threonine 147–glycine 169, cysteine 170–serine 200, and serine 201–serine 222. The active-site Proton donor is the aspartate 215. The cysteines at positions 217 and 233 are disulfide-linked. Residue histidine 237 is part of the active site. 2 PbH1 repeats span residues valine 252–alanine 273 and isoleucine 281–glutamine 303. Asparagine 254 is a glycosylation site (N-linked (GlcNAc...) asparagine). An N-linked (GlcNAc...) asparagine glycan is attached at asparagine 327. Cysteine 345 and cysteine 350 form a disulfide bridge. Residue asparagine 352 is glycosylated (N-linked (GlcNAc...) asparagine). A disulfide bridge connects residues cysteine 369 and cysteine 378.

It belongs to the glycosyl hydrolase 28 family.

The protein resides in the secreted. The catalysed reaction is (1,4-alpha-D-galacturonosyl)n+m + H2O = (1,4-alpha-D-galacturonosyl)n + (1,4-alpha-D-galacturonosyl)m.. Its function is as follows. Involved in maceration and soft-rotting of plant tissue. Hydrolyzes the 1,4-alpha glycosidic bonds of de-esterified pectate in the smooth region of the plant cell wall. In Aspergillus fumigatus (strain CBS 144.89 / FGSC A1163 / CEA10) (Neosartorya fumigata), this protein is Probable endopolygalacturonase AFUB_016610.